The primary structure comprises 499 residues: Replication factor C large subunit (499 aa).

Residue 50–57 (GPPGVGKT) coordinates ATP. Positions 428 to 499 (EAERRVEAAE…QATLFDFLKK (72 aa)) are disordered. Acidic residues predominate over residues 436–472 (AEEEETMEAGEPEEELEEVEEEELTEEELEEAEEEIE). Basic and acidic residues predominate over residues 473 to 484 (TVGKKEKPEKEK).

This sequence belongs to the activator 1 small subunits family. RfcL subfamily. Heteromultimer composed of small subunits (RfcS) and large subunits (RfcL).

Its function is as follows. Part of the RFC clamp loader complex which loads the PCNA sliding clamp onto DNA. In Thermococcus kodakarensis (strain ATCC BAA-918 / JCM 12380 / KOD1) (Pyrococcus kodakaraensis (strain KOD1)), this protein is Replication factor C large subunit.